Here is a 203-residue protein sequence, read N- to C-terminus: Large ribosomal subunit protein uL22 (203 aa).

A compositionally biased stretch (polar residues) spans 138–167; it reads PENTQSGALSQQSQAEQPQNDPENGVDSQL. Residues 138–203 are disordered; the sequence is PENTQSGALS…TVLAQEKEVK (66 aa). Residues 168–177 are compositionally biased toward low complexity; it reads SAKTNSTTTA. Residues 183–196 show a composition bias toward polar residues; sequence ADNSTKNDATNTVL.

This sequence belongs to the universal ribosomal protein uL22 family. Part of the 50S ribosomal subunit.

This protein binds specifically to 23S rRNA; its binding is stimulated by other ribosomal proteins, e.g. L4, L17, and L20. It is important during the early stages of 50S assembly. It makes multiple contacts with different domains of the 23S rRNA in the assembled 50S subunit and ribosome. In terms of biological role, the globular domain of the protein is located near the polypeptide exit tunnel on the outside of the subunit, while an extended beta-hairpin is found that lines the wall of the exit tunnel in the center of the 70S ribosome. This Mesomycoplasma hyopneumoniae (strain 7448) (Mycoplasma hyopneumoniae) protein is Large ribosomal subunit protein uL22.